The primary structure comprises 237 residues: Sugar fermentation stimulation protein homolog (237 aa).

This sequence belongs to the SfsA family.

The sequence is that of Sugar fermentation stimulation protein homolog from Colwellia psychrerythraea (strain 34H / ATCC BAA-681) (Vibrio psychroerythus).